We begin with the raw amino-acid sequence, 424 residues long: Arginine biosynthesis bifunctional protein ArgJ (424 aa).

Residues threonine 172, lysine 198, threonine 209, glutamate 296, asparagine 419, and serine 424 each contribute to the substrate site. Threonine 209 acts as the Nucleophile in catalysis.

This sequence belongs to the ArgJ family. In terms of assembly, heterotetramer of two alpha and two beta chains.

Its subcellular location is the cytoplasm. The enzyme catalyses N(2)-acetyl-L-ornithine + L-glutamate = N-acetyl-L-glutamate + L-ornithine. It carries out the reaction L-glutamate + acetyl-CoA = N-acetyl-L-glutamate + CoA + H(+). It functions in the pathway amino-acid biosynthesis; L-arginine biosynthesis; L-ornithine and N-acetyl-L-glutamate from L-glutamate and N(2)-acetyl-L-ornithine (cyclic): step 1/1. It participates in amino-acid biosynthesis; L-arginine biosynthesis; N(2)-acetyl-L-ornithine from L-glutamate: step 1/4. Its function is as follows. Catalyzes two activities which are involved in the cyclic version of arginine biosynthesis: the synthesis of N-acetylglutamate from glutamate and acetyl-CoA as the acetyl donor, and of ornithine by transacetylation between N(2)-acetylornithine and glutamate. This Gluconobacter oxydans (strain 621H) (Gluconobacter suboxydans) protein is Arginine biosynthesis bifunctional protein ArgJ.